The following is a 90-amino-acid chain: Acylphosphatase (90 aa).

The 88-residue stretch at 3–90 folds into the Acylphosphatase-like domain; sequence QYRIIVDGRV…DGFQKFNISY (88 aa). Residues arginine 18 and asparagine 36 contribute to the active site.

It belongs to the acylphosphatase family.

It carries out the reaction an acyl phosphate + H2O = a carboxylate + phosphate + H(+). The protein is Acylphosphatase (acyP) of Bacillus licheniformis (strain ATCC 14580 / DSM 13 / JCM 2505 / CCUG 7422 / NBRC 12200 / NCIMB 9375 / NCTC 10341 / NRRL NRS-1264 / Gibson 46).